The chain runs to 268 residues: Tryptophan synthase alpha chain (268 aa).

Active-site proton acceptor residues include E49 and D60.

It belongs to the TrpA family. As to quaternary structure, tetramer of two alpha and two beta chains.

The enzyme catalyses (1S,2R)-1-C-(indol-3-yl)glycerol 3-phosphate + L-serine = D-glyceraldehyde 3-phosphate + L-tryptophan + H2O. The protein operates within amino-acid biosynthesis; L-tryptophan biosynthesis; L-tryptophan from chorismate: step 5/5. In terms of biological role, the alpha subunit is responsible for the aldol cleavage of indoleglycerol phosphate to indole and glyceraldehyde 3-phosphate. In Escherichia coli (strain SMS-3-5 / SECEC), this protein is Tryptophan synthase alpha chain.